Consider the following 644-residue polypeptide: Zinc finger protein 74 (644 aa).

Positions 43 to 114 (VSFKDVAVDF…QREVPRGPCP (72 aa)) constitute a KRAB domain. 12 C2H2-type zinc fingers span residues 248 to 270 (FVCGECGKAFRQSSSLTLHRRWH), 276 to 298 (YKCDECGKAFTWSTNLLEHRRIH), 304 to 326 (FFCGECGKAFSCHSSLNVHQRIH), 332 to 354 (YKCSACEKAFSCSSLLSMHLRVH), 360 to 382 (YRCGECGKAFNQRTHLTRHHRIH), 388 to 410 (YQCGSCGKAFTCHSSLTVHEKIH), 416 to 438 (FKCSDCEKAFNSRSRLTLHQRTH), 444 to 466 (FKCADCGKGFSCHAYLLVHRRIH), 472 to 494 (FKCNECGKAFSSHAYLIVHRRIH), 500 to 522 (FDCSQCWKAFSCHSSLIVHQRIH), 528 to 550 (YKCSECGRAFSQNHCLIKHQKIH), and 556 to 578 (FKCEKCGEMFNWSSHLTEHQRLH). A Glycyl lysine isopeptide (Lys-Gly) (interchain with G-Cter in SUMO2) cross-link involves residue Lys-582.

The protein belongs to the krueppel C2H2-type zinc-finger protein family. Highly expressed in the fetal brain.

The protein localises to the nucleus. Its function is as follows. May play a role in RNA metabolism. In Homo sapiens (Human), this protein is Zinc finger protein 74 (ZNF74).